We begin with the raw amino-acid sequence, 62 residues long: MRQVVKEGFKEEKNNRVAVWRLEVDYELATLYEAMQKENEEQIEQSKNKLERLRKEWIRLNG.

A coiled-coil region spans residues 26–62 (YELATLYEAMQKENEEQIEQSKNKLERLRKEWIRLNG).

This is an uncharacterized protein from Bacillus subtilis (strain 168).